The chain runs to 102 residues: ATP-dependent Clp protease adapter protein ClpS (102 aa).

The protein belongs to the ClpS family. In terms of assembly, binds to the N-terminal domain of the chaperone ClpA.

Its function is as follows. Involved in the modulation of the specificity of the ClpAP-mediated ATP-dependent protein degradation. This Desulfotalea psychrophila (strain LSv54 / DSM 12343) protein is ATP-dependent Clp protease adapter protein ClpS.